A 171-amino-acid polypeptide reads, in one-letter code: Large ribosomal subunit protein uL10 (171 aa).

The protein belongs to the universal ribosomal protein uL10 family. As to quaternary structure, part of the ribosomal stalk of the 50S ribosomal subunit. The N-terminus interacts with L11 and the large rRNA to form the base of the stalk. The C-terminus forms an elongated spine to which L12 dimers bind in a sequential fashion forming a multimeric L10(L12)X complex.

In terms of biological role, forms part of the ribosomal stalk, playing a central role in the interaction of the ribosome with GTP-bound translation factors. In Maricaulis maris (strain MCS10) (Caulobacter maris), this protein is Large ribosomal subunit protein uL10.